The sequence spans 621 residues: Chaperone protein HtpG (621 aa).

Residues 1–341 form an a; substrate-binding region; sequence MSNQEYTFQT…SEDLPLNVSR (341 aa). The interval 342–547 is b; the sequence is EILQQNKILA…GDEPNAMMAN (206 aa). The tract at residues 548-621 is c; the sequence is WMRQMGQSVP…RLNSVLLKAL (74 aa).

This sequence belongs to the heat shock protein 90 family. As to quaternary structure, homodimer.

Its subcellular location is the cytoplasm. Molecular chaperone. Has ATPase activity. The protein is Chaperone protein HtpG of Helicobacter pylori (strain J99 / ATCC 700824) (Campylobacter pylori J99).